Consider the following 525-residue polypeptide: GMP synthase [glutamine-hydrolyzing] (525 aa).

The Glutamine amidotransferase type-1 domain maps to 9–207; it reads RILILDFGSQ…VHEICGCPAD (199 aa). The active-site Nucleophile is the Cys-86. Active-site residues include His-181 and Glu-183. The 193-residue stretch at 208–400 folds into the GMPS ATP-PPase domain; that stretch reads WTPGNIVDDL…LGLPADMVYR (193 aa). 235 to 241 contributes to the ATP binding site; that stretch reads SGGVDSS.

As to quaternary structure, homodimer.

It catalyses the reaction XMP + L-glutamine + ATP + H2O = GMP + L-glutamate + AMP + diphosphate + 2 H(+). It participates in purine metabolism; GMP biosynthesis; GMP from XMP (L-Gln route): step 1/1. Functionally, catalyzes the synthesis of GMP from XMP. The chain is GMP synthase [glutamine-hydrolyzing] from Alkalilimnicola ehrlichii (strain ATCC BAA-1101 / DSM 17681 / MLHE-1).